The following is a 284-amino-acid chain: Acetyl-coenzyme A carboxylase carboxyl transferase subunit beta (284 aa).

The CoA carboxyltransferase N-terminal domain occupies 25–284 (LWVKCPETGA…LCKILTKSVQ (260 aa)).

Belongs to the AccD/PCCB family. In terms of assembly, acetyl-CoA carboxylase is a heterohexamer composed of biotin carboxyl carrier protein (AccB), biotin carboxylase (AccC) and two subunits each of ACCase subunit alpha (AccA) and ACCase subunit beta (AccD).

The protein resides in the cytoplasm. The catalysed reaction is N(6)-carboxybiotinyl-L-lysyl-[protein] + acetyl-CoA = N(6)-biotinyl-L-lysyl-[protein] + malonyl-CoA. The protein operates within lipid metabolism; malonyl-CoA biosynthesis; malonyl-CoA from acetyl-CoA: step 1/1. In terms of biological role, component of the acetyl coenzyme A carboxylase (ACC) complex. Biotin carboxylase (BC) catalyzes the carboxylation of biotin on its carrier protein (BCCP) and then the CO(2) group is transferred by the transcarboxylase to acetyl-CoA to form malonyl-CoA. In Liberibacter asiaticus (strain psy62), this protein is Acetyl-coenzyme A carboxylase carboxyl transferase subunit beta.